A 368-amino-acid chain; its full sequence is 7,8-didemethyl-8-hydroxy-5-deazariboflavin synthase (368 aa).

The Radical SAM core domain maps to 36 to 272 (LSYCRNVFLP…EEVSVQVPPN (237 aa)). 3 residues coordinate [4Fe-4S] cluster: Cys50, Cys54, and Cys57.

It belongs to the radical SAM superfamily. CofG family. As to quaternary structure, consists of two subunits, CofG and CofH. [4Fe-4S] cluster serves as cofactor.

The enzyme catalyses 5-amino-5-(4-hydroxybenzyl)-6-(D-ribitylimino)-5,6-dihydrouracil + S-adenosyl-L-methionine = 7,8-didemethyl-8-hydroxy-5-deazariboflavin + 5'-deoxyadenosine + L-methionine + NH4(+) + H(+). Its pathway is cofactor biosynthesis; coenzyme F0 biosynthesis. Its function is as follows. Catalyzes the radical-mediated synthesis of 7,8-didemethyl-8-hydroxy-5-deazariboflavin from 5-amino-5-(4-hydroxybenzyl)-6-(D-ribitylimino)-5,6-dihydrouracil. In Haloarcula marismortui (strain ATCC 43049 / DSM 3752 / JCM 8966 / VKM B-1809) (Halobacterium marismortui), this protein is 7,8-didemethyl-8-hydroxy-5-deazariboflavin synthase.